The chain runs to 504 residues: Acid phosphatase A (504 aa).

The signal sequence occupies residues 1–22; it reads MYTLLDILKGLPLLAVAAIASA. 7 N-linked (GlcNAc...) asparagine glycosylation sites follow: asparagine 84, asparagine 112, asparagine 168, asparagine 260, asparagine 415, asparagine 450, and asparagine 474.

Belongs to the metallophosphoesterase superfamily. Purple acid phosphatase family. As to quaternary structure, monomer.

Its subcellular location is the secreted. The enzyme catalyses a phosphate monoester + H2O = an alcohol + phosphate. Acid phosphatase involved in the regulation of fungal phenotypic traits and virulence in C.parasitica. This is Acid phosphatase A from Cryphonectria parasitica (strain ATCC 38755 / EP155).